Consider the following 240-residue polypeptide: ATP-dependent dethiobiotin synthetase BioD (240 aa).

13-18 (GVGKTI) serves as a coordination point for ATP. Residue T17 participates in Mg(2+) binding. K38 is an active-site residue. T42 provides a ligand contact to substrate. Residues D55, 116 to 119 (EGVG), and 214 to 216 (PYL) each bind ATP. D55 and E116 together coordinate Mg(2+).

The protein belongs to the dethiobiotin synthetase family. Homodimer. Requires Mg(2+) as cofactor.

It localises to the cytoplasm. The enzyme catalyses (7R,8S)-7,8-diammoniononanoate + CO2 + ATP = (4R,5S)-dethiobiotin + ADP + phosphate + 3 H(+). The protein operates within cofactor biosynthesis; biotin biosynthesis; biotin from 7,8-diaminononanoate: step 1/2. Catalyzes a mechanistically unusual reaction, the ATP-dependent insertion of CO2 between the N7 and N8 nitrogen atoms of 7,8-diaminopelargonic acid (DAPA, also called 7,8-diammoniononanoate) to form a ureido ring. The polypeptide is ATP-dependent dethiobiotin synthetase BioD (Thermodesulfovibrio yellowstonii (strain ATCC 51303 / DSM 11347 / YP87)).